A 629-amino-acid polypeptide reads, in one-letter code: Phosphomethylpyrimidine synthase (629 aa).

Residues 1-24 are disordered; it reads MSTKPKNAAHLSESAQVDSGSVQP. Polar residues predominate over residues 13–24; the sequence is ESAQVDSGSVQP. Substrate-binding positions include asparagine 233, methionine 262, tyrosine 291, histidine 327, 347-349, 388-391, and glutamate 427; these read SRG and DGLR. Position 431 (histidine 431) interacts with Zn(2+). Tyrosine 454 is a substrate binding site. Histidine 495 contacts Zn(2+). [4Fe-4S] cluster is bound by residues cysteine 575, cysteine 578, and cysteine 583.

This sequence belongs to the ThiC family. As to quaternary structure, homodimer. [4Fe-4S] cluster is required as a cofactor.

It catalyses the reaction 5-amino-1-(5-phospho-beta-D-ribosyl)imidazole + S-adenosyl-L-methionine = 4-amino-2-methyl-5-(phosphooxymethyl)pyrimidine + CO + 5'-deoxyadenosine + formate + L-methionine + 3 H(+). Its pathway is cofactor biosynthesis; thiamine diphosphate biosynthesis. Functionally, catalyzes the synthesis of the hydroxymethylpyrimidine phosphate (HMP-P) moiety of thiamine from aminoimidazole ribotide (AIR) in a radical S-adenosyl-L-methionine (SAM)-dependent reaction. The sequence is that of Phosphomethylpyrimidine synthase from Pseudomonas syringae pv. tomato (strain ATCC BAA-871 / DC3000).